The sequence spans 28 residues: Conotoxin de7b (28 aa).

Disulfide bonds link Cys-2-Cys-18, Cys-9-Cys-22, and Cys-17-Cys-27. Pro-4 bears the 4-hydroxyproline; partial mark. 4-carboxyglutamate; partial is present on Glu-7. Pro-14 carries the post-translational modification 4-hydroxyproline; partial.

As to expression, expressed by the venom duct.

It localises to the secreted. May inhibit sodium (Nav) or calcium channels (Cav). This chain is Conotoxin de7b, found in Conasprella delessertii (Sozon's cone).